Here is a 475-residue protein sequence, read N- to C-terminus: Sulfate adenylyltransferase subunit 1 (475 aa).

One can recognise a tr-type G domain in the interval 25-239 (KSLLRFLTCG…EVLETVEIQR (215 aa)). Residues 34–41 (GSVDDGKS) are G1. 34-41 (GSVDDGKS) lines the GTP pocket. The segment at 92 to 96 (GITID) is G2. The segment at 113 to 116 (DTPG) is G3. GTP contacts are provided by residues 113-117 (DTPGH) and 168-171 (NKMD). Positions 168 to 171 (NKMD) are G4. The segment at 206–208 (SAL) is G5.

The protein belongs to the TRAFAC class translation factor GTPase superfamily. Classic translation factor GTPase family. CysN/NodQ subfamily. Heterodimer composed of CysD, the smaller subunit, and CysN.

The catalysed reaction is sulfate + ATP + H(+) = adenosine 5'-phosphosulfate + diphosphate. It participates in sulfur metabolism; hydrogen sulfide biosynthesis; sulfite from sulfate: step 1/3. With CysD forms the ATP sulfurylase (ATPS) that catalyzes the adenylation of sulfate producing adenosine 5'-phosphosulfate (APS) and diphosphate, the first enzymatic step in sulfur assimilation pathway. APS synthesis involves the formation of a high-energy phosphoric-sulfuric acid anhydride bond driven by GTP hydrolysis by CysN coupled to ATP hydrolysis by CysD. This is Sulfate adenylyltransferase subunit 1 from Shigella boydii serotype 18 (strain CDC 3083-94 / BS512).